The sequence spans 600 residues: Xylulose kinase (600 aa).

79–82 (WLEA) serves as a coordination point for substrate. Serine 244 carries the post-translational modification Phosphoserine. Residue aspartate 299 coordinates substrate. Residues glycine 358 and 505–509 (GASKN) contribute to the ATP site.

This sequence belongs to the FGGY kinase family.

The protein localises to the cytoplasm. It carries out the reaction D-xylulose + ATP = D-xylulose 5-phosphate + ADP + H(+). Functionally, xylulose kinase necessary for growth in culture media with D-xylulose as the solecarbon source. This chain is Xylulose kinase, found in Saccharomyces cerevisiae (strain ATCC 204508 / S288c) (Baker's yeast).